A 477-amino-acid polypeptide reads, in one-letter code: Ribulose bisphosphate carboxylase large chain (477 aa).

Positions 1–2 are excised as a propeptide; sequence MS. Proline 3 is modified (N-acetylproline). Lysine 14 bears the N6,N6,N6-trimethyllysine mark. Substrate contacts are provided by asparagine 123 and threonine 173. The Proton acceptor role is filled by lysine 175. Residue lysine 177 coordinates substrate. Mg(2+)-binding residues include lysine 201, aspartate 203, and glutamate 204. Lysine 201 carries the post-translational modification N6-carboxylysine. Residue histidine 294 is the Proton acceptor of the active site. Positions 295, 327, and 379 each coordinate substrate.

The protein belongs to the RuBisCO large chain family. Type I subfamily. As to quaternary structure, heterohexadecamer of 8 large chains and 8 small chains; disulfide-linked. The disulfide link is formed within the large subunit homodimers. Mg(2+) is required as a cofactor. In terms of processing, the disulfide bond which can form in the large chain dimeric partners within the hexadecamer appears to be associated with oxidative stress and protein turnover.

The protein resides in the plastid. The protein localises to the chloroplast. It catalyses the reaction 2 (2R)-3-phosphoglycerate + 2 H(+) = D-ribulose 1,5-bisphosphate + CO2 + H2O. The enzyme catalyses D-ribulose 1,5-bisphosphate + O2 = 2-phosphoglycolate + (2R)-3-phosphoglycerate + 2 H(+). Its function is as follows. RuBisCO catalyzes two reactions: the carboxylation of D-ribulose 1,5-bisphosphate, the primary event in carbon dioxide fixation, as well as the oxidative fragmentation of the pentose substrate in the photorespiration process. Both reactions occur simultaneously and in competition at the same active site. The chain is Ribulose bisphosphate carboxylase large chain from Carthamus tinctorius (Safflower).